The primary structure comprises 132 residues: Arginine decarboxylase proenzyme (132 aa).

The active-site Schiff-base intermediate with substrate; via pyruvic acid is Ser-70. Pyruvic acid (Ser); by autocatalysis is present on Ser-70. The active-site Proton acceptor; for processing activity is the His-75. Residue Cys-90 is the Proton donor; for catalytic activity of the active site.

The protein belongs to the prokaryotic AdoMetDC family. Type 1 subfamily. In terms of assembly, heterooctamer of four alpha and four beta chains arranged as a tetramer of alpha/beta heterodimers. It depends on pyruvate as a cofactor. Is synthesized initially as an inactive proenzyme. Formation of the active enzyme involves a self-maturation process in which the active site pyruvoyl group is generated from an internal serine residue via an autocatalytic post-translational modification. Two non-identical subunits are generated from the proenzyme in this reaction, and the pyruvate is formed at the N-terminus of the alpha chain, which is derived from the carboxyl end of the proenzyme. The post-translation cleavage follows an unusual pathway, termed non-hydrolytic serinolysis, in which the side chain hydroxyl group of the serine supplies its oxygen atom to form the C-terminus of the beta chain, while the remainder of the serine residue undergoes an oxidative deamination to produce ammonia and the pyruvoyl group blocking the N-terminus of the alpha chain.

The enzyme catalyses L-arginine + H(+) = agmatine + CO2. Its pathway is amine and polyamine biosynthesis; agmatine biosynthesis; agmatine from L-arginine: step 1/1. Functionally, specifically catalyzes the decarboxylation of L-arginine to agmatine. Has no S-adenosylmethionine decarboxylase (AdoMetDC) activity. In Aeropyrum pernix (strain ATCC 700893 / DSM 11879 / JCM 9820 / NBRC 100138 / K1), this protein is Arginine decarboxylase proenzyme.